The following is a 146-amino-acid chain: MCDIYHWGLIAFIVGILFLCVFMLSCGYFLGGCSSSRSKNVPFESGIKSIGNARIQFSVKFYLIAMFFVIFDVEGIYVYAWAISVRDVGWIGFSEIFIFIFILLVSLIYLIRIGMFDWIEQSSRHVHCVDFFDIDTSRYLKKSNKR.

The next 3 helical transmembrane spans lie at 4–24, 63–83, and 91–111; these read IYHW…VFML, LIAM…AWAI, and IGFS…IYLI.

It belongs to the complex I subunit 3 family. In terms of assembly, NDH-1 is composed of 13 different subunits. Subunits NuoA, H, J, K, L, M, N constitute the membrane sector of the complex.

It localises to the cell inner membrane. It catalyses the reaction a quinone + NADH + 5 H(+)(in) = a quinol + NAD(+) + 4 H(+)(out). Its function is as follows. NDH-1 shuttles electrons from NADH, via FMN and iron-sulfur (Fe-S) centers, to quinones in the respiratory chain. The immediate electron acceptor for the enzyme in this species is believed to be ubiquinone. Couples the redox reaction to proton translocation (for every two electrons transferred, four hydrogen ions are translocated across the cytoplasmic membrane), and thus conserves the redox energy in a proton gradient. This is NADH-quinone oxidoreductase subunit A from Blochmanniella pennsylvanica (strain BPEN).